The primary structure comprises 470 residues: MRKKRKGSETEGWENLPDDLSCSTASRSSNFRSHFSLEGYARLKKRCKETEAVESVGSFKRRIAGVATAPPCGASSLVSSGRGLKRKIGCIDVSTQTGRKNKIDDDYVFGRNIGKGKFGSVRICKSRKNGTEFACKTLKKGEETVHREVEIMQHLSGHPRVVTLHAVYEESDCFHLVMELCSGGRLIDQMVKVGRYSEQRAANIFKDLMLVINYCHEMGVVHRDIKPENILLTAAGKIQLADFGLAMRIAKGQTLSGLAGSPAYVAPEVLSENYSEKVDVWSAGVLLYALLSGVLPFKGDSLDAIFEAIKNVKLDFNTGVWESVSKPARDLLARMLTREESARITADEVLRHPWILFYTDRTLKTMCIKSKHKSQAGSSTCLQNRSPTEKTDLNRADREKKIPSDSPTDSFSNTEEEEDESGVVDVLVVAIANVRISEPKRSRVCSPTNNPIEQQHSSNLTSTSTLCRAF.

The Protein kinase domain maps to 107-355 (YVFGRNIGKG…ADEVLRHPWI (249 aa)). Residues 113 to 121 (IGKGKFGSV) and Lys136 contribute to the ATP site. Asp224 functions as the Proton acceptor in the catalytic mechanism. Over residues 377–386 (GSSTCLQNRS) the composition is skewed to polar residues. 2 disordered regions span residues 377 to 419 (GSST…EEED) and 441 to 464 (RSRVCSPTNNPIEQQHSSNLTSTS). Basic and acidic residues predominate over residues 387-403 (PTEKTDLNRADREKKIP). Polar residues predominate over residues 445 to 464 (CSPTNNPIEQQHSSNLTSTS).

It belongs to the protein kinase superfamily. Ser/Thr protein kinase family.

It catalyses the reaction L-seryl-[protein] + ATP = O-phospho-L-seryl-[protein] + ADP + H(+). The catalysed reaction is L-threonyl-[protein] + ATP = O-phospho-L-threonyl-[protein] + ADP + H(+). The polypeptide is Serine/threonine-protein kinase PEPKR2 (PEPKR2) (Arabidopsis thaliana (Mouse-ear cress)).